Reading from the N-terminus, the 155-residue chain is Small ribosomal subunit protein uS7 (155 aa).

Belongs to the universal ribosomal protein uS7 family. As to quaternary structure, part of the 30S ribosomal subunit. Contacts proteins S9 and S11.

Its function is as follows. One of the primary rRNA binding proteins, it binds directly to 16S rRNA where it nucleates assembly of the head domain of the 30S subunit. Is located at the subunit interface close to the decoding center, probably blocks exit of the E-site tRNA. This chain is Small ribosomal subunit protein uS7, found in Thioalkalivibrio sulfidiphilus (strain HL-EbGR7).